The primary structure comprises 243 residues: UPF0502 protein Rmet_3697 (243 aa).

Over residues 1-11 the composition is skewed to low complexity; that stretch reads MTDTPDTPDTP. A disordered region spans residues 1–23; it reads MTDTPDTPDTPMATGASSRPPLR.

This sequence belongs to the UPF0502 family.

This is UPF0502 protein Rmet_3697 from Cupriavidus metallidurans (strain ATCC 43123 / DSM 2839 / NBRC 102507 / CH34) (Ralstonia metallidurans).